The chain runs to 178 residues: Gamma-crystallin S (178 aa).

Ser2 carries the N-acetylserine modification. The segment at 2–5 (SKTG) is N-terminal arm. 2 Beta/gamma crystallin 'Greek key' domains span residues 6-44 (GKIS…RVEG) and 45-87 (GTWA…RAVH). The interval 88-93 (LSSGGQ) is connecting peptide. 2 Beta/gamma crystallin 'Greek key' domains span residues 94–134 (AKIQ…KVVE) and 135–177 (GTWI…RRIV).

The protein belongs to the beta/gamma-crystallin family. In terms of assembly, monomer.

Its function is as follows. Crystallins are the dominant structural components of the vertebrate eye lens. In Mus musculus (Mouse), this protein is Gamma-crystallin S (Crygs).